Here is a 135-residue protein sequence, read N- to C-terminus: Holo-[acyl-carrier-protein] synthase (135 aa).

Mg(2+) contacts are provided by D8 and E58.

Belongs to the P-Pant transferase superfamily. AcpS family. Mg(2+) is required as a cofactor.

The protein resides in the cytoplasm. The enzyme catalyses apo-[ACP] + CoA = holo-[ACP] + adenosine 3',5'-bisphosphate + H(+). Functionally, transfers the 4'-phosphopantetheine moiety from coenzyme A to a Ser of acyl-carrier-protein. In Ligilactobacillus salivarius (strain UCC118) (Lactobacillus salivarius), this protein is Holo-[acyl-carrier-protein] synthase.